Reading from the N-terminus, the 138-residue chain is Putative pre-16S rRNA nuclease (138 aa).

The protein belongs to the YqgF nuclease family.

The protein resides in the cytoplasm. Its function is as follows. Could be a nuclease involved in processing of the 5'-end of pre-16S rRNA. This Escherichia coli O45:K1 (strain S88 / ExPEC) protein is Putative pre-16S rRNA nuclease.